Here is a 252-residue protein sequence, read N- to C-terminus: ATP synthase subunit a (252 aa).

6 helical membrane-spanning segments follow: residues 29–49, 87–107, 117–137, 146–166, 196–216, and 219–239; these read FTNV…FLFI, FFPL…IGLF, IMIT…YGFY, LFVP…IEII, FIVS…LPLI, and VAIT…FTVL.

The protein belongs to the ATPase A chain family. As to quaternary structure, F-type ATPases have 2 components, CF(1) - the catalytic core - and CF(0) - the membrane proton channel. CF(1) has five subunits: alpha(3), beta(3), gamma(1), delta(1), epsilon(1). CF(0) has three main subunits: a(1), b(2) and c(9-12). The alpha and beta chains form an alternating ring which encloses part of the gamma chain. CF(1) is attached to CF(0) by a central stalk formed by the gamma and epsilon chains, while a peripheral stalk is formed by the delta and b chains.

It localises to the cell inner membrane. Functionally, key component of the proton channel; it plays a direct role in the translocation of protons across the membrane. This chain is ATP synthase subunit a, found in Bartonella tribocorum (strain CIP 105476 / IBS 506).